A 406-amino-acid polypeptide reads, in one-letter code: MKGFLTLLLVCAILSTGYCQSRRRAALTGLVAGATIGALASGGLGAGAGGFGVGGFPVGVGAVGIPVAVGGGIPYGYGGYSGYGYGYPAGGYGGYSYGYPTGGYGGYSYGYPTGGYGGYSYGYPTGGYGGYSYGYPTGGYSGYSYGYPTGGYSGYSYGYPTGGYSGYSYGYPTGGYSGYSYGYPTGGYSGYSYGYPTGGYSGYSYPTGGYSGYSYSSTPGYGYYGSGSGMGGMRSGYSYYSSPAPSYYSSGSMTPGYGYYSSGSGIGGGMGSGYSYYSSPAPSYYSSSVSPGYGYYGSGSGMRGYGYYSSSTPMYYGSRSTGYGPFSSGLGGMGSGYSYYSSSTPSYYSSGSMTPGYGYYGSTSYPGPGYGSYSYRTTSYQPSSYGYSSYGTTYPGHGHWHGHKDC.

The signal sequence occupies residues 1 to 19 (MKGFLTLLLVCAILSTGYC). Transmembrane regions (helical) follow at residues 26-48 (ALTG…GAGA) and 58-80 (VGVG…YGGY). The interval 78–197 (GGYSGYGYGY…YSGYSYGYPT (120 aa)) is 10 X 12 AA tandem repeat of G-G-Y-[SG]-G-Y-[GS]-Y-G-Y-P-[AT].

In terms of tissue distribution, expression is confined to the prism and organic layers of the shell with no expression detected in the nacreous shell layer. Also expressed in the mantle edge, extrapallial fluid, hemolymph and, to a lesser extent, in the viscus (at protein level). In the mantle, localizes to inner epithelial cells of the outer fold and the outer epithelial cells of the middle fold at the bottom of the periostracal groove.

It is found in the membrane. Functionally, binds chitin and may serve as a framework constituent participating in shell formation. Inhibits aragonite precipitation and may regulate aragonite growth during shell layer formation. Does not affect calcite crystallization. The polypeptide is Prisilkin-39 (Pinctada fucata (Akoya pearl oyster)).